The sequence spans 204 residues: Small ribosomal subunit protein uS4 (204 aa).

The segment at 25-47 (SPVNKREYGPGQHGQRRKKPSDY) is disordered. One can recognise an S4 RNA-binding domain in the interval 93 to 156 (RRLDAVVYRM…KQFAFVMEAA (64 aa)).

It belongs to the universal ribosomal protein uS4 family. As to quaternary structure, part of the 30S ribosomal subunit. Contacts protein S5. The interaction surface between S4 and S5 is involved in control of translational fidelity.

Functionally, one of the primary rRNA binding proteins, it binds directly to 16S rRNA where it nucleates assembly of the body of the 30S subunit. In terms of biological role, with S5 and S12 plays an important role in translational accuracy. This is Small ribosomal subunit protein uS4 from Rhodospirillum centenum (strain ATCC 51521 / SW).